The following is a 673-amino-acid chain: DNA ligase (673 aa).

Residues 35 to 39 (DAQYD), 84 to 85 (SL), and glutamate 115 each bind NAD(+). Lysine 117 acts as the N6-AMP-lysine intermediate in catalysis. NAD(+) is bound by residues arginine 138, glutamate 178, lysine 294, and lysine 318. The Zn(2+) site is built by cysteine 412, cysteine 415, cysteine 430, and cysteine 435. The region spanning 594–673 (LQSDRLAGKS…DELHALLVDE (80 aa)) is the BRCT domain.

The protein belongs to the NAD-dependent DNA ligase family. LigA subfamily. The cofactor is Mg(2+). It depends on Mn(2+) as a cofactor.

The enzyme catalyses NAD(+) + (deoxyribonucleotide)n-3'-hydroxyl + 5'-phospho-(deoxyribonucleotide)m = (deoxyribonucleotide)n+m + AMP + beta-nicotinamide D-nucleotide.. Functionally, DNA ligase that catalyzes the formation of phosphodiester linkages between 5'-phosphoryl and 3'-hydroxyl groups in double-stranded DNA using NAD as a coenzyme and as the energy source for the reaction. It is essential for DNA replication and repair of damaged DNA. This Herpetosiphon aurantiacus (strain ATCC 23779 / DSM 785 / 114-95) protein is DNA ligase.